Here is a 111-residue protein sequence, read N- to C-terminus: MFKATARYIRVQPRKARLAAGLMRNLSVMEAQQQLNFSQLKAGRCLKKVLDSAVANAVLNENVKREQLSVIEVRVDAGPVYKRAKSKSRGGRSPILKRTSHLTVIVGEKER.

This sequence belongs to the universal ribosomal protein uL22 family. In terms of assembly, part of the 50S ribosomal subunit.

Its function is as follows. This protein binds specifically to 23S rRNA; its binding is stimulated by other ribosomal proteins, e.g. L4, L17, and L20. It is important during the early stages of 50S assembly. It makes multiple contacts with different domains of the 23S rRNA in the assembled 50S subunit and ribosome. In terms of biological role, the globular domain of the protein is located near the polypeptide exit tunnel on the outside of the subunit, while an extended beta-hairpin is found that lines the wall of the exit tunnel in the center of the 70S ribosome. The polypeptide is Large ribosomal subunit protein uL22 (Chlamydia caviae (strain ATCC VR-813 / DSM 19441 / 03DC25 / GPIC) (Chlamydophila caviae)).